The sequence spans 116 residues: Large ribosomal subunit protein bL19 (116 aa).

Belongs to the bacterial ribosomal protein bL19 family.

This protein is located at the 30S-50S ribosomal subunit interface and may play a role in the structure and function of the aminoacyl-tRNA binding site. The sequence is that of Large ribosomal subunit protein bL19 from Pseudothermotoga lettingae (strain ATCC BAA-301 / DSM 14385 / NBRC 107922 / TMO) (Thermotoga lettingae).